A 496-amino-acid polypeptide reads, in one-letter code: Cytochrome P450 4ae1 (496 aa).

Cys443 is a binding site for heme.

Belongs to the cytochrome P450 family. Heme is required as a cofactor.

Its subcellular location is the endoplasmic reticulum membrane. It is found in the microsome membrane. May be involved in the metabolism of insect hormones and in the breakdown of synthetic insecticides. The polypeptide is Cytochrome P450 4ae1 (Cyp4ae1) (Drosophila melanogaster (Fruit fly)).